The sequence spans 115 residues: NADH-ubiquinone oxidoreductase chain 3 (115 aa).

Transmembrane regions (helical) follow at residues 3–23, 55–75, and 86–106; these read LVMA…IAFW, FFLV…LLPL, and TMLI…AYEW.

The protein belongs to the complex I subunit 3 family. In terms of assembly, core subunit of respiratory chain NADH dehydrogenase (Complex I) which is composed of 45 different subunits. Interacts with TMEM186. Interacts with TMEM242.

It is found in the mitochondrion inner membrane. It catalyses the reaction a ubiquinone + NADH + 5 H(+)(in) = a ubiquinol + NAD(+) + 4 H(+)(out). In terms of biological role, core subunit of the mitochondrial membrane respiratory chain NADH dehydrogenase (Complex I) which catalyzes electron transfer from NADH through the respiratory chain, using ubiquinone as an electron acceptor. Essential for the catalytic activity of complex I. The polypeptide is NADH-ubiquinone oxidoreductase chain 3 (Hippopotamus amphibius (Hippopotamus)).